The following is a 216-amino-acid chain: Sperm microtubule inner protein 8 (216 aa).

Microtubule inner protein component of sperm flagellar doublet microtubules. Expressed in sperm.

It localises to the cytoplasm. It is found in the cytoskeleton. The protein resides in the flagellum axoneme. Its function is as follows. Microtubule inner protein (MIP) part of the dynein-decorated doublet microtubules (DMTs) in flagellum axoneme. May serve to reinforce and thus stabilize the microtubule structure in the sperm flagella. The polypeptide is Sperm microtubule inner protein 8 (SPMIP8) (Bos taurus (Bovine)).